The following is a 186-amino-acid chain: Nucleoside triphosphate pyrophosphatase (186 aa).

Asp-68 acts as the Proton acceptor in catalysis.

This sequence belongs to the Maf family. Requires a divalent metal cation as cofactor.

Its subcellular location is the cytoplasm. The enzyme catalyses a ribonucleoside 5'-triphosphate + H2O = a ribonucleoside 5'-phosphate + diphosphate + H(+). It carries out the reaction a 2'-deoxyribonucleoside 5'-triphosphate + H2O = a 2'-deoxyribonucleoside 5'-phosphate + diphosphate + H(+). In terms of biological role, nucleoside triphosphate pyrophosphatase. May have a dual role in cell division arrest and in preventing the incorporation of modified nucleotides into cellular nucleic acids. The sequence is that of Nucleoside triphosphate pyrophosphatase from Prochlorococcus marinus (strain MIT 9303).